The primary structure comprises 243 residues: NAD-dependent protein deacetylase (243 aa).

One can recognise a Deacetylase sirtuin-type domain in the interval 1 to 243 (MRNDLETLKH…VSVVKSLMTE (243 aa)). NAD(+) contacts are provided by alanine 24, phenylalanine 35, arginine 36, glutamine 105, isoleucine 107, aspartate 108, and histidine 123. Phenylalanine 35 serves as a coordination point for nicotinamide. Isoleucine 107 and aspartate 108 together coordinate nicotinamide. Histidine 123 functions as the Proton acceptor in the catalytic mechanism. Positions 131, 134, 151, and 154 each coordinate Zn(2+). NAD(+)-binding residues include serine 192, serine 193, asparagine 215, and aspartate 232.

It belongs to the sirtuin family. Class U subfamily. It depends on Zn(2+) as a cofactor.

The protein localises to the cytoplasm. The catalysed reaction is N(6)-acetyl-L-lysyl-[protein] + NAD(+) + H2O = 2''-O-acetyl-ADP-D-ribose + nicotinamide + L-lysyl-[protein]. Its function is as follows. NAD-dependent protein deacetylase which modulates the activities of several enzymes which are inactive in their acetylated form. This chain is NAD-dependent protein deacetylase, found in Staphylococcus aureus (strain Mu50 / ATCC 700699).